We begin with the raw amino-acid sequence, 464 residues long: Protein transport protein HofB homolog (464 aa).

An ATP-binding site is contributed by 264 to 271 (GPTGSGKS).

Belongs to the GSP E family.

The sequence is that of Protein transport protein HofB homolog (hofB) from Haemophilus influenzae (strain ATCC 51907 / DSM 11121 / KW20 / Rd).